A 454-amino-acid chain; its full sequence is tRNA modification GTPase MnmE (454 aa).

Residues R23, E80, and K120 each coordinate (6S)-5-formyl-5,6,7,8-tetrahydrofolate. The TrmE-type G domain occupies 216 to 377; it reads GMKVVIAGRP…LRNHLKQSMG (162 aa). Position 226 (N226) interacts with K(+). GTP contacts are provided by residues 226 to 231, 245 to 251, 270 to 273, 335 to 338, and 358 to 360; these read NAGKSS, TDIAGTT, DTAG, NKAD, and SAR. S230 lines the Mg(2+) pocket. K(+)-binding residues include T245, I247, and T250. T251 serves as a coordination point for Mg(2+). K454 provides a ligand contact to (6S)-5-formyl-5,6,7,8-tetrahydrofolate.

The protein belongs to the TRAFAC class TrmE-Era-EngA-EngB-Septin-like GTPase superfamily. TrmE GTPase family. In terms of assembly, homodimer. Heterotetramer of two MnmE and two MnmG subunits. It depends on K(+) as a cofactor.

The protein localises to the cytoplasm. In terms of biological role, exhibits a very high intrinsic GTPase hydrolysis rate. Involved in the addition of a carboxymethylaminomethyl (cmnm) group at the wobble position (U34) of certain tRNAs, forming tRNA-cmnm(5)s(2)U34. The protein is tRNA modification GTPase MnmE of Escherichia coli O17:K52:H18 (strain UMN026 / ExPEC).